The following is a 124-amino-acid chain: Non-specific lipid-transfer protein (124 aa).

An N-terminal signal peptide occupies residues 1–26 (MANSGVMKLVCLVLACMVVAAPLAEA). 4 disulfide bridges follow: cysteine 30–cysteine 77, cysteine 40–cysteine 54, cysteine 55–cysteine 100, and cysteine 75–cysteine 114.

Belongs to the plant LTP family.

In terms of biological role, plant non-specific lipid-transfer proteins transfer phospholipids as well as galactolipids across membranes. May play a role in wax or cutin deposition in the cell walls of expanding epidermal cells and certain secretory tissues. This Macadamia integrifolia (Macadamia nut) protein is Non-specific lipid-transfer protein.